Here is a 415-residue protein sequence, read N- to C-terminus: MMMTQRISPSNKRRRVSFVRDFPQFSVKDESDIGGDDVATIKENLDGKEDSNCVGVAYRDHHRPKEESFDSIMKKAGFNVANGNLGNGKFPPSKRNVPLPCEGKVQPLSVEEGIKLMAYESQRRRCFGKPLVSTKVVQKHRYSPAKKKLSNATALRVRHSPMKKLSNASRLRANAHRPTQHKDERRSGVLSVIQRNRLSKDLTPRQKVQEVLRIFTLVFDELDRNKAARRGGSETAKSRIDYQTWTILREMGMQVNSQKRIGSVPGIKVGDKIQFKAALSVIGLHFGIMSGIDYMYKGNKEVATSIVSSEGNDYGDRFINDVMIYCGQGGNMRSKDHKAIKDQKLVGGNLALANSIKEKTPVRVIRGERRLDNRGKDYVYDGLYRVEKYWEERGPQGNILFKFKLRRTCQPYVDF.

Positions 163-186 (KKLSNASRLRANAHRPTQHKDERR) are disordered. The YDG domain occupies 262–407 (GSVPGIKVGD…NILFKFKLRR (146 aa)).

It is found in the nucleus. This is YDG domain-containing protein At5g47160 from Arabidopsis thaliana (Mouse-ear cress).